The chain runs to 227 residues: Cytidylate kinase (227 aa).

12–20 contributes to the ATP binding site; it reads GPSGAGKGT.

Belongs to the cytidylate kinase family. Type 1 subfamily.

The protein localises to the cytoplasm. It carries out the reaction CMP + ATP = CDP + ADP. The enzyme catalyses dCMP + ATP = dCDP + ADP. This is Cytidylate kinase from Xanthomonas euvesicatoria pv. vesicatoria (strain 85-10) (Xanthomonas campestris pv. vesicatoria).